The following is a 256-amino-acid chain: Probable ATP-dependent transporter slr0075 (256 aa).

Positions 6–250 (LSIKNLTASV…EEKGYDFLDE (245 aa)) constitute an ABC transporter domain. ATP is bound at residue 38-45 (GRNGSGKS).

It belongs to the ABC transporter superfamily. Ycf16 family.

The protein is Probable ATP-dependent transporter slr0075 of Synechocystis sp. (strain ATCC 27184 / PCC 6803 / Kazusa).